A 170-amino-acid polypeptide reads, in one-letter code: Non-classical export protein 102 (170 aa).

The Cytoplasmic segment spans residues 1–11 (MLAIGDVILRA). The region spanning 6-141 (DVILRAFNFV…TFIFIASAIF (136 aa)) is the MARVEL domain. A helical transmembrane segment spans residues 12-32 (FNFVFLVIALGLTGSLAATTI). Topologically, residues 33-38 (TQHNPQ) are extracellular. The helical transmembrane segment at 39–61 (INFAVFAAAFGLLTSSFYGVFAY) threads the bilayer. Residues 62–76 (FVAAFAWPVILFVFD) lie on the Cytoplasmic side of the membrane. The chain crosses the membrane as a helical span at residues 77 to 97 (FLNFVFTFAAATAIAAGIRAH). Residues 98-125 (SCSNQDYLDDNNIAQGSSGRCRKAQAST) are Extracellular-facing. A helical membrane pass occupies residues 126 to 146 (AFLYFSTFIFIASAIFSAISL). Residues 147–170 (SKGGLFGHSSRPAPRTGVPTMSQV) lie on the Cytoplasmic side of the membrane.

The protein belongs to the NCE102 family.

The protein resides in the cell membrane. Involved in membrane organization. Involved in a novel pathway of export of proteins that lack a cleavable signal sequence. Non-classical export pathway also functions as an alternative clearance/detoxification pathway to eliminate damaged material, when the basic repair pathway is not sufficient. Regulates actin organization and subsequent morphogenesis and pathogenesis. The polypeptide is Non-classical export protein 102 (Candida albicans (strain SC5314 / ATCC MYA-2876) (Yeast)).